Reading from the N-terminus, the 554-residue chain is Solute carrier family 22 member 22 (554 aa).

Residues 1-15 (MDFDEILHHVGDSGR) are Cytoplasmic-facing. A helical membrane pass occupies residues 16–36 (FQICMIILLNILSLVLSPHDV). Topologically, residues 37 to 144 (LENFTAAIPA…DLVCDFQSFK (108 aa)) are extracellular. A glycan (N-linked (GlcNAc...) asparagine) is linked at N39. Residues 145 to 165 (YYAQATSLAGHLVSCPLSGII) traverse the membrane as a helical segment. The Cytoplasmic portion of the chain corresponds to 166–172 (SDRFGRK). Residues 173–193 (PLLMYCSLAYGAVGTYCAFAP) traverse the membrane as a helical segment. Residue N194 is glycosylated (N-linked (GlcNAc...) asparagine). The Extracellular portion of the chain corresponds to 194-199 (NFSVYC). The chain crosses the membrane as a helical span at residues 200–220 (VLRFLLSAFQSTILINSLILV). The Cytoplasmic segment spans residues 221–231 (LEEASVQWHPT). Residues 232-252 (IIVLSGLFNSIGQGVLGGLAY) form a helical membrane-spanning segment. Topologically, residues 253 to 258 (VISDWH) are extracellular. A helical membrane pass occupies residues 259–279 (LLQLAYALPFFIFFVLFCWVP). The Cytoplasmic portion of the chain corresponds to 280-347 (ESVRWLIITG…DIFINPLIRK (68 aa)). The helical transmembrane segment at 348–368 (IVLSNSSLLFAELFSFVGLLL) threads the bilayer. Residues 369 to 376 (DVQLLGKN) lie on the Extracellular side of the membrane. The helical transmembrane segment at 377–397 (MFLTQIFLGAIDVPSKSLTYF) threads the bilayer. Over 398–405 (TIRNVSRR) the chain is Cytoplasmic. Residues 406–426 (PLIAFLLLTTGSCITITIFIS) form a helical membrane-spanning segment. Residues 427 to 434 (EEMYVLRT) are Extracellular-facing. Residues 435–455 (IIFILGKGCFAAFTCISTTYI) form a helical membrane-spanning segment. Residues 456–466 (NELSPVELRST) lie on the Cytoplasmic side of the membrane. The helical transmembrane segment at 467-487 (LNGVFLAVVRLAGVLSALTLA) threads the bilayer. Over 488–491 (TRKY) the chain is Extracellular. Residues 492–512 (FVYLPMILYGVLPIVATISIL) form a helical membrane-spanning segment. Residues 513–554 (FLPETFNLPHTDIIKDMEKRKRLMSKNISKKEGQDFLETTEC) are Cytoplasmic-facing.

It belongs to the major facilitator (TC 2.A.1) superfamily. Organic cation transporter (TC 2.A.1.19) family. As to expression, specifically expressed in kidney where it is found in proximal convoluted tubules (at protein level). Colocalizes with the prostaglandin-inactivating enzyme HPGD in kidney (at protein level). Not detected in other tissues tested.

Its subcellular location is the basolateral cell membrane. In terms of biological role, sodium-independent organic anion transporter which exhibits high specificity for a subset of prostaglandins including prostaglandin E2 (PGE2), prostaglandin E1 (PGE1), prostaglandin F2-alpha (PGF2-alpha) and prostaglandin D2 (PGD2). This is Solute carrier family 22 member 22 from Mus musculus (Mouse).